The following is a 575-amino-acid chain: Probable methionine--tRNA ligase, mitochondrial (575 aa).

The 'HIGH' region signature appears at 52–62 (FYVNGPPHIGH). Residues 352–356 (KMSKS) carry the 'KMSKS' region motif. Residue Lys-355 coordinates ATP.

This sequence belongs to the class-I aminoacyl-tRNA synthetase family.

The protein resides in the mitochondrion matrix. It carries out the reaction tRNA(Met) + L-methionine + ATP = L-methionyl-tRNA(Met) + AMP + diphosphate. The sequence is that of Probable methionine--tRNA ligase, mitochondrial (mmetS) from Dictyostelium discoideum (Social amoeba).